Here is a 418-residue protein sequence, read N- to C-terminus: Multidrug resistance protein MdtG (418 aa).

11 helical membrane-spanning segments follow: residues 19–39 (IGCF…PLYV), 56–76 (LVFS…GGLA), 90–110 (LGMA…QFLI), 113–133 (ALLG…ATQI), 144–164 (TLST…GVLA), 171–191 (PVFF…LLFI), 222–242 (LFVT…ILTL), 251–271 (VANI…AALI), 288–308 (ILIA…FVQT), 317–337 (FLLG…LVYN), and 376–396 (AVFL…GLSL).

Belongs to the major facilitator superfamily. DHA1 family. MdtG (TC 2.A.1.2.20) subfamily.

The protein resides in the cell inner membrane. The sequence is that of Multidrug resistance protein MdtG from Enterobacter lignolyticus (strain SCF1).